The following is an 83-amino-acid chain: Hainantoxin-III 4 (83 aa).

Positions 1–21 (MKASMYLALAGLVLLFVVGYA) are cleaved as a signal peptide. A propeptide spanning residues 22 to 48 (SESEEKEFPRELLSKIFAVDDFKGKER) is cleaved from the precursor. Cystine bridges form between Cys50-Cys65, Cys57-Cys70, and Cys64-Cys77. Leucine amide is present on Leu81.

It belongs to the neurotoxin 10 (Hwtx-1) family. 15 (Hntx-3) subfamily. In terms of assembly, monomer. As to expression, expressed by the venom gland.

It is found in the secreted. Functionally, selective antagonist of neuronal tetrodotoxin (TTX)-sensitive voltage-gated sodium channels (IC(50)=1270 nM on Nav1.1/SCN1A, 270 nM on Nav1.2/SCN2A, 491 nM on Nav1.3/SCN3A and 232 nM on Nav1.7/SCN9A). This toxin suppress Nav1.7 current amplitude without significantly altering the activation, inactivation, and repriming kinetics. Short extreme depolarizations partially activate the toxin-bound channel, indicating voltage-dependent inhibition of this toxin. This toxin increases the deactivation of the Nav1.7 current after extreme depolarizations. The toxin-Nav1.7 complex is gradually dissociated upon prolonged strong depolarizations in a voltage-dependent manner, and the unbound toxin rebinds to Nav1.7 after a long repolarization. Moreover, analysis of chimeric channels showed that the DIIS3-S4 linker is critical for toxin binding to Nav1.7. These data are consistent with this toxin interacting with Nav1.7 site 4 and trapping the domain II voltage sensor in the closed state. The protein is Hainantoxin-III 4 of Cyriopagopus hainanus (Chinese bird spider).